Reading from the N-terminus, the 200-residue chain is Small ribosomal subunit protein uS4 (200 aa).

Positions 22 to 43 are disordered; the sequence is TGKELERRPYAPGQHGPTQRKK. Residues 92–170 enclose the S4 RNA-binding domain; sequence QRLDNIVYRL…VPEYVTFDAE (79 aa).

The protein belongs to the universal ribosomal protein uS4 family. As to quaternary structure, part of the 30S ribosomal subunit. Contacts protein S5. The interaction surface between S4 and S5 is involved in control of translational fidelity.

Its function is as follows. One of the primary rRNA binding proteins, it binds directly to 16S rRNA where it nucleates assembly of the body of the 30S subunit. In terms of biological role, with S5 and S12 plays an important role in translational accuracy. The polypeptide is Small ribosomal subunit protein uS4 (Listeria monocytogenes serovar 1/2a (strain ATCC BAA-679 / EGD-e)).